The following is a 397-amino-acid chain: Elongation factor Tu (397 aa).

Positions 10–207 (LPHVNVGTIG…TLDSYIPEPE (198 aa)) constitute a tr-type G domain. The interval 19 to 26 (GHVDHGKT) is G1. A GTP-binding site is contributed by 19 to 26 (GHVDHGKT). Position 26 (Thr-26) interacts with Mg(2+). Residues 60-64 (GITIN) are G2. The G3 stretch occupies residues 81–84 (DCPG). GTP is bound by residues 81-85 (DCPGH) and 136-139 (NKAD). The tract at residues 136–139 (NKAD) is G4. The segment at 174 to 176 (SAR) is G5.

This sequence belongs to the TRAFAC class translation factor GTPase superfamily. Classic translation factor GTPase family. EF-Tu/EF-1A subfamily. As to quaternary structure, monomer.

The protein localises to the cytoplasm. It catalyses the reaction GTP + H2O = GDP + phosphate + H(+). Its function is as follows. GTP hydrolase that promotes the GTP-dependent binding of aminoacyl-tRNA to the A-site of ribosomes during protein biosynthesis. The sequence is that of Elongation factor Tu from Pseudomonas fluorescens (strain Pf0-1).